The sequence spans 180 residues: UPF0227 protein Shew_1627 (180 aa).

It belongs to the UPF0227 family.

The sequence is that of UPF0227 protein Shew_1627 from Shewanella loihica (strain ATCC BAA-1088 / PV-4).